The sequence spans 61 residues: Photosystem II reaction center protein Z (61 aa).

2 helical membrane passes run 8 to 28 (ALLV…VLFS) and 41 to 61 (LVGS…SFFK).

Belongs to the PsbZ family. In terms of assembly, PSII is composed of 1 copy each of membrane proteins PsbA, PsbB, PsbC, PsbD, PsbE, PsbF, PsbH, PsbI, PsbJ, PsbK, PsbL, PsbM, PsbT, PsbX, PsbY, PsbZ, Psb30/Ycf12, peripheral proteins PsbO, CyanoQ (PsbQ), PsbU, PsbV and a large number of cofactors. It forms dimeric complexes.

The protein resides in the cellular thylakoid membrane. Its function is as follows. May control the interaction of photosystem II (PSII) cores with the light-harvesting antenna, regulates electron flow through the 2 photosystem reaction centers. PSII is a light-driven water plastoquinone oxidoreductase, using light energy to abstract electrons from H(2)O, generating a proton gradient subsequently used for ATP formation. This Synechococcus sp. (strain JA-3-3Ab) (Cyanobacteria bacterium Yellowstone A-Prime) protein is Photosystem II reaction center protein Z.